The following is a 928-amino-acid chain: Eukaryotic translation initiation factor 3 subunit C (928 aa).

Disordered regions lie at residues 1–37 (MSRF…SDDE) and 157–286 (FREA…EDGE). A compositionally biased stretch (acidic residues) spans 11–20 (SESESSEEEV). Polar residues predominate over residues 22 to 33 (TQFNNKAQNFQF). Residues Ser34, Ser165, Ser177, and Ser186 each carry the phosphoserine modification. Acidic residues predominate over residues 162 to 171 (DQESDVDEGE). Basic and acidic residues predominate over residues 172–184 (GDVHDSDADRAGD). Residues 215-240 (DDDDSEDSIDWDPDTESETESSEDEN) are compositionally biased toward acidic residues. The segment covering 245–264 (MRERFLKRTTEKEDKDDDKR) has biased composition (basic and acidic residues). Basic residues predominate over residues 265-277 (KDKRKEQKHKVRK). Positions 656–832 (FHMHINLELL…ETVVMHRSEP (177 aa)) constitute a PCI domain. Residues 864–928 (FFQRGNMGNR…QQQVHTIDEE (65 aa)) are disordered. Over residues 898–909 (QRNRNQRGHHKQ) the composition is skewed to basic residues. Low complexity predominate over residues 910-921 (NQQQNQQQQQQQ).

Belongs to the eIF-3 subunit C family. Component of the eukaryotic translation initiation factor 3 (eIF-3) complex. The eIF-3 complex interacts with pix.

It localises to the cytoplasm. In terms of biological role, component of the eukaryotic translation initiation factor 3 (eIF-3) complex, which is involved in protein synthesis of a specialized repertoire of mRNAs and, together with other initiation factors, stimulates binding of mRNA and methionyl-tRNAi to the 40S ribosome. The eIF-3 complex specifically targets and initiates translation of a subset of mRNAs involved in cell proliferation. In Drosophila grimshawi (Hawaiian fruit fly), this protein is Eukaryotic translation initiation factor 3 subunit C.